Reading from the N-terminus, the 95-residue chain is Small ribosomal subunit protein bS18 (95 aa).

Belongs to the bacterial ribosomal protein bS18 family. In terms of assembly, part of the 30S ribosomal subunit. Forms a tight heterodimer with protein bS6.

In terms of biological role, binds as a heterodimer with protein bS6 to the central domain of the 16S rRNA, where it helps stabilize the platform of the 30S subunit. The chain is Small ribosomal subunit protein bS18 from Rickettsia prowazekii (strain Madrid E).